The chain runs to 558 residues: Solute carrier family 22 member 6-A (558 aa).

Residues 1–15 (MSFAELLERTGGMGR) are Cytoplasmic-facing. A helical transmembrane segment spans residues 16–36 (FQITQVALMCFPILLMASHNL). Residues 37–140 (LQNFSAAIPD…LVCGHKNRRQ (104 aa)) are Extracellular-facing. The helical transmembrane segment at 141-161 (LAQSVYMGGVLVGAIILGGLS) threads the bilayer. Topologically, residues 162–167 (DRYGRR) are cytoplasmic. A helical membrane pass occupies residues 168–188 (ALLIWSYFQMAVSGLCSAFSP). The Extracellular segment spans residues 189 to 197 (NYLSYCIFR). A helical transmembrane segment spans residues 198–218 (FLTGMALSGIGLNTTALIVEW). The Cytoplasmic segment spans residues 219 to 225 (VPTRVRT). A helical transmembrane segment spans residues 226–246 (ITGTLAGFSYTVGQLLLAGLA). Residues 247 to 253 (YAMRDWR) are Extracellular-facing. Residues 254 to 274 (WLQLCVSLPFFIFFLYSWWFP) traverse the membrane as a helical segment. The Cytoplasmic segment spans residues 275–342 (ESARWLVLSG…DLIRTSTIRR (68 aa)). Residues 343 to 363 (ISCALSLVWFSTSFAYYGLAM) form a helical membrane-spanning segment. Over 364–369 (DLQNFN) the chain is Extracellular. The helical transmembrane segment at 370–390 (VSIYLIQVIFGAVDFPAKIFS) threads the bilayer. At 391–400 (TTAMIYVGRK) the chain is on the cytoplasmic side. Residues 401 to 421 (FTQLMSLILGGVVILANSFVP) traverse the membrane as a helical segment. The Extracellular portion of the chain corresponds to 422 to 428 (HEMQTVR). Residues 429–449 (TGMAVFGKGCLAASFSCVFLY) traverse the membrane as a helical segment. Over 450 to 462 (TTELYPTVIRQSG) the chain is Cytoplasmic. A helical transmembrane segment spans residues 463-483 (LGLCSTMARIGGIVAPLVKIL). Topologically, residues 484 to 488 (GEYYP) are extracellular. Residues 489-509 (FLPLVIYGGAPIISGLCVFFL) form a helical membrane-spanning segment. Residues 510-558 (PETVNKPLPDTIEEVEKRIKAPKKENEMNEIVSLKKKEGMKENPVNDVL) lie on the Cytoplasmic side of the membrane. Residues 539–550 (EIVSLKKKEGMK) are compositionally biased toward basic and acidic residues. The tract at residues 539-558 (EIVSLKKKEGMKENPVNDVL) is disordered.

This sequence belongs to the major facilitator (TC 2.A.1) superfamily. Organic cation transporter (TC 2.A.1.19) family. Post-translationally, glycosylated. Glycosylation is necessary for proper targeting of the transporter to the plasma membrane.

Its subcellular location is the cell membrane. It localises to the basolateral cell membrane. The protein localises to the basal cell membrane. Functionally, involved in the renal elimination of endogenous and exogenous organic anions. Mediates the sodium-independent uptake of p-aminohippurate (PAH), 2,3-dimercapto-1-propanesulfonic acid (DMPS), cidofovir, adefovir, 9-(2-phosphonylmethoxyethyl) guanine (PMEG), 9-(2-phosphonylmethoxyethyl) diaminopurine (PMEDAP), ochratoxin (OTA), acyclovir (ACV), 3'-azido-3-'deoxythymidine (AZT), cimetidine (CMD), 2,4-dichloro-phenoxyacetate (2,4-D), hippurate (HA), indoleacetate (IA), indoxyl sulfate (IS) and 3-carboxy-4-methyl-5-propyl-2-furanpropionate (CMPF) and edaravone sulfate. PAH uptake is inhibited by p-chloromercuribenzenesulphonate (PCMBS), diethyl pyrocarbonate (DEPC), indomethacin, sulindac, diclofenac, carprofen, okadaic acid, benzothiazolylcysteine (BTC), S-chlorotrifluoroethylcysteine (CTFC), cysteine S-conjugates S-dichlorovinylcysteine (DCVC), furosemide, steviol, phorbol 12-myristate 13-acetate (PMA), calcium ionophore A23187, benzylpenicillin, bumetamide, losartan, probenecid, phenol red, urate, glutarate and alpha-ketoglutarate. The sequence is that of Solute carrier family 22 member 6-A (slc22a6-a) from Xenopus laevis (African clawed frog).